The chain runs to 173 residues: Spermidine N(1)-acetyltransferase (173 aa).

An N-acetyltransferase domain is found at 5–162 (LTLRALERGD…GRYQDVKRMY (158 aa)). Residues M28, E33, E41, and 49–52 (HIHD) each bind spermine. E33 is a binding site for Mg(2+). Positions 33 and 41 each coordinate spermidine. E75 lines the Mg(2+) pocket. 84-86 (EFQ) is a binding site for spermine. Residues 87–89 (III), 94–100 (QGKGFAR), and 127–136 (NPKAVHLYEE) contribute to the acetyl-CoA site. Residue Y134 is the Proton donor of the active site.

Belongs to the acetyltransferase family. Homododecamer; dimer of hexamers. Exists in solution in a variety of protein homooligomeric states including dodecamers in an open state. The presence of the polyamines spermidine or spermine shifts the equilibrium to dodecamers and induces the formation of the closed, symmetric dodecamers.

The protein resides in the cytoplasm. It catalyses the reaction an alkane-alpha,omega-diamine + acetyl-CoA = an N-acetylalkane-alpha,omega-diamine + CoA + H(+). It carries out the reaction spermidine + acetyl-CoA = N(1)-acetylspermidine + CoA + H(+). The catalysed reaction is spermidine + acetyl-CoA = N(8)-acetylspermidine + CoA + H(+). The enzyme catalyses spermine + acetyl-CoA = N(1)-acetylspermine + CoA + H(+). It participates in amine and polyamine degradation; spermidine degradation. The protein operates within amine and polyamine degradation; spermine degradation. With respect to regulation, allosterically regulated by polyamines. Polyamines trigger conformational changes and induce the symmetric closed dodecameric state of the protein when they bind to their allosteric sites. Its function is as follows. Involved in the protection against polyamine toxicity by regulating their concentration. Catalyzes the transfer of an acetyl group from acetyl coenzyme A (AcCoA) to the primary amino groups of spermidine to yield N(1)- and N(8)-acetylspermidine. It can use polyamines such as spermine and N(1)-acetylspermine, but not putrescine or cadaverine. This is Spermidine N(1)-acetyltransferase (speG) from Vibrio cholerae serotype O1 (strain ATCC 39315 / El Tor Inaba N16961).